A 116-amino-acid polypeptide reads, in one-letter code: Putative serine proteinase inhibitor 2 homolog first part (116 aa).

It belongs to the serpin family. Poxviruses subfamily.

The polypeptide is Putative serine proteinase inhibitor 2 homolog first part (Vaccinia virus (strain Copenhagen) (VACV)).